Here is a 633-residue protein sequence, read N- to C-terminus: tRNA uridine 5-carboxymethylaminomethyl modification enzyme MnmG (633 aa).

FAD is bound by residues 15-20 (GAGHAG), Ile-127, and Ser-182. Residue 276–290 (GPRYCPSIEDKIVRF) coordinates NAD(+). Gln-373 contributes to the FAD binding site.

Belongs to the MnmG family. In terms of assembly, homodimer. Heterotetramer of two MnmE and two MnmG subunits. It depends on FAD as a cofactor.

The protein resides in the cytoplasm. NAD-binding protein involved in the addition of a carboxymethylaminomethyl (cmnm) group at the wobble position (U34) of certain tRNAs, forming tRNA-cmnm(5)s(2)U34. This Streptococcus agalactiae serotype III (strain NEM316) protein is tRNA uridine 5-carboxymethylaminomethyl modification enzyme MnmG.